The following is a 419-amino-acid chain: Phosphoglycerate kinase (419 aa).

Residues valine 24, aspartate 25, phenylalanine 26, asparagine 27, arginine 40, serine 63, histidine 64, glycine 66, arginine 67, leucine 122, arginine 123, histidine 169, and arginine 170 each coordinate (2R)-3-phosphoglycerate. ADP is bound at residue glycine 213. CDP is bound at residue glycine 213. Residues alanine 214 and lysine 215 each coordinate AMP. Alanine 214 contributes to the ATP binding site. Residue alanine 214 coordinates Mg(2+). Positions 217 and 218 each coordinate Mg(2+). Aspartate 218 lines the CDP pocket. Lysine 219 contributes to the AMP binding site. Lysine 219 provides a ligand contact to ATP. Position 237 (glycine 237) interacts with ADP. Glycine 237 contacts CDP. Glycine 238 and glycine 313 together coordinate AMP. 2 residues coordinate ATP: glycine 238 and glycine 313. Residues glycine 338 and phenylalanine 343 each coordinate CDP. Phenylalanine 343 is an ADP binding site. Glutamate 344 serves as a coordination point for AMP. The ATP site is built by glutamate 344, aspartate 375, and threonine 376. A Mg(2+)-binding site is contributed by aspartate 375.

The protein belongs to the phosphoglycerate kinase family. Monomer. The cofactor is Mg(2+).

The catalysed reaction is (2R)-3-phosphoglycerate + ATP = (2R)-3-phospho-glyceroyl phosphate + ADP. The protein operates within carbohydrate degradation; glycolysis; pyruvate from D-glyceraldehyde 3-phosphate: step 2/5. The sequence is that of Phosphoglycerate kinase (PGK) from Sterkiella nova (Ciliate).